The following is a 357-amino-acid chain: Transactivator protein DR7 (357 aa).

Residues 107–187 form an interaction with host p53 region; sequence LVGKDGAVYV…LLTVGGLCQT (81 aa).

Belongs to the herpesviridae US22 family. In terms of assembly, interacts with host p53 and inhibits p53-activated transcription.

Its function is as follows. Involved in transactivation. Displays transforming activity. The chain is Transactivator protein DR7 (DR7L) from Homo sapiens (Human).